The following is a 115-amino-acid chain: Large ribosomal subunit protein bL19 (115 aa).

Belongs to the bacterial ribosomal protein bL19 family.

Its function is as follows. This protein is located at the 30S-50S ribosomal subunit interface and may play a role in the structure and function of the aminoacyl-tRNA binding site. This chain is Large ribosomal subunit protein bL19, found in Streptococcus pyogenes serotype M49 (strain NZ131).